Here is a 207-residue protein sequence, read N- to C-terminus: Thiamine-phosphate synthase (207 aa).

4-amino-2-methyl-5-(diphosphooxymethyl)pyrimidine contacts are provided by residues 37–41 (QYRDK) and asparagine 69. The Mg(2+) site is built by aspartate 70 and aspartate 89. Residue serine 108 coordinates 4-amino-2-methyl-5-(diphosphooxymethyl)pyrimidine. A 2-[(2R,5Z)-2-carboxy-4-methylthiazol-5(2H)-ylidene]ethyl phosphate-binding site is contributed by 135 to 137 (SRT). Lysine 138 provides a ligand contact to 4-amino-2-methyl-5-(diphosphooxymethyl)pyrimidine. Position 164 (glycine 164) interacts with 2-[(2R,5Z)-2-carboxy-4-methylthiazol-5(2H)-ylidene]ethyl phosphate.

The protein belongs to the thiamine-phosphate synthase family. Requires Mg(2+) as cofactor.

The enzyme catalyses 2-[(2R,5Z)-2-carboxy-4-methylthiazol-5(2H)-ylidene]ethyl phosphate + 4-amino-2-methyl-5-(diphosphooxymethyl)pyrimidine + 2 H(+) = thiamine phosphate + CO2 + diphosphate. The catalysed reaction is 2-(2-carboxy-4-methylthiazol-5-yl)ethyl phosphate + 4-amino-2-methyl-5-(diphosphooxymethyl)pyrimidine + 2 H(+) = thiamine phosphate + CO2 + diphosphate. It carries out the reaction 4-methyl-5-(2-phosphooxyethyl)-thiazole + 4-amino-2-methyl-5-(diphosphooxymethyl)pyrimidine + H(+) = thiamine phosphate + diphosphate. Its pathway is cofactor biosynthesis; thiamine diphosphate biosynthesis; thiamine phosphate from 4-amino-2-methyl-5-diphosphomethylpyrimidine and 4-methyl-5-(2-phosphoethyl)-thiazole: step 1/1. Functionally, condenses 4-methyl-5-(beta-hydroxyethyl)thiazole monophosphate (THZ-P) and 2-methyl-4-amino-5-hydroxymethyl pyrimidine pyrophosphate (HMP-PP) to form thiamine monophosphate (TMP). The sequence is that of Thiamine-phosphate synthase from Chromobacterium violaceum (strain ATCC 12472 / DSM 30191 / JCM 1249 / CCUG 213 / NBRC 12614 / NCIMB 9131 / NCTC 9757 / MK).